The chain runs to 226 residues: MDGIHDLGGRAGLGPIKPESDEPVFHSDWERSVLTMFPAMALAGAFNLDQFRGAMEQIPPHDYLTSQYYEHWMHAMIHHGIEAGIFDSDELDRRTQYYMDHPDDTTPTRQDPQLVETISQLITHGADYRRPTDTEAAFAVGDKVIVRSDASPNTHTRRAGYVRGRVGEVVATHGAYVFPDTNALGAGESPEHLYTVRFSATELWGEPAAPNVVNHIDVFEPYLLPA.

Residues 1–22 (MDGIHDLGGRAGLGPIKPESDE) form a disordered region.

The protein belongs to the nitrile hydratase subunit beta family. In terms of assembly, heterodimer of an alpha and a beta chain.

It carries out the reaction an aliphatic primary amide = an aliphatic nitrile + H2O. Its function is as follows. NHase catalyzes the hydration of various nitrile compounds to the corresponding amides. This Rhodococcus rhodochrous protein is Low-molecular weight cobalt-containing nitrile hydratase subunit beta.